The chain runs to 145 residues: Ribosomal RNA large subunit methyltransferase H (145 aa).

S-adenosyl-L-methionine contacts are provided by residues Gly94 and 113–118 (LSPLTF).

The protein belongs to the RNA methyltransferase RlmH family. In terms of assembly, homodimer.

It is found in the cytoplasm. The catalysed reaction is pseudouridine(1915) in 23S rRNA + S-adenosyl-L-methionine = N(3)-methylpseudouridine(1915) in 23S rRNA + S-adenosyl-L-homocysteine + H(+). Functionally, specifically methylates the pseudouridine at position 1915 (m3Psi1915) in 23S rRNA. In Sorangium cellulosum (strain So ce56) (Polyangium cellulosum (strain So ce56)), this protein is Ribosomal RNA large subunit methyltransferase H.